We begin with the raw amino-acid sequence, 157 residues long: MEKVPMTARGEKLLREELDRLLKLRPKITEAIAEARELGDLKENAEYHAAREEQGICEAQIRDIEYKLSVAQVIDVTKMENSGKVIFGATVTVIDVNSDEEKTYQIVGDDEADIKSGRISVNSPIARGLIGKFEGDEVSIATPGGNKVFEIDRVEYL.

Residues 14–37 (LREELDRLLKLRPKITEAIAEARE) are a coiled coil.

It belongs to the GreA/GreB family.

Its function is as follows. Necessary for efficient RNA polymerase transcription elongation past template-encoded arresting sites. The arresting sites in DNA have the property of trapping a certain fraction of elongating RNA polymerases that pass through, resulting in locked ternary complexes. Cleavage of the nascent transcript by cleavage factors such as GreA or GreB allows the resumption of elongation from the new 3'terminus. GreA releases sequences of 2 to 3 nucleotides. This Vibrio cholerae serotype O1 (strain ATCC 39315 / El Tor Inaba N16961) protein is Transcription elongation factor GreA.